Reading from the N-terminus, the 671-residue chain is DNA ligase (671 aa).

NAD(+) is bound by residues 32-36 (DAEYD), 81-82 (SL), and Glu-113. The N6-AMP-lysine intermediate role is filled by Lys-115. Residues Arg-136, Glu-173, Lys-290, and Lys-314 each coordinate NAD(+). Zn(2+) is bound by residues Cys-408, Cys-411, Cys-426, and Cys-432. Residues 593–671 (EIDSPFAGKT…EAEMLRLLGS (79 aa)) enclose the BRCT domain.

The protein belongs to the NAD-dependent DNA ligase family. LigA subfamily. The cofactor is Mg(2+). Requires Mn(2+) as cofactor.

It catalyses the reaction NAD(+) + (deoxyribonucleotide)n-3'-hydroxyl + 5'-phospho-(deoxyribonucleotide)m = (deoxyribonucleotide)n+m + AMP + beta-nicotinamide D-nucleotide.. Its function is as follows. DNA ligase that catalyzes the formation of phosphodiester linkages between 5'-phosphoryl and 3'-hydroxyl groups in double-stranded DNA using NAD as a coenzyme and as the energy source for the reaction. It is essential for DNA replication and repair of damaged DNA. The polypeptide is DNA ligase (Shigella boydii serotype 4 (strain Sb227)).